The sequence spans 370 residues: Probable pectin lyase E (370 aa).

Cysteine 75 and cysteine 96 are oxidised to a cystine. Residue arginine 245 is part of the active site. Asparagine 307 carries an N-linked (GlcNAc...) asparagine glycan. A disulfide bond links cysteine 311 and cysteine 319.

The protein belongs to the polysaccharide lyase 1 family.

The protein localises to the secreted. It catalyses the reaction Eliminative cleavage of (1-&gt;4)-alpha-D-galacturonan methyl ester to give oligosaccharides with 4-deoxy-6-O-methyl-alpha-D-galact-4-enuronosyl groups at their non-reducing ends.. Pectinolytic enzymes consist of four classes of enzymes: pectin lyase, polygalacturonase, pectin methylesterase and rhamnogalacturonase. Among pectinolytic enzymes, pectin lyase is the most important in depolymerization of pectin, since it cleaves internal glycosidic bonds of highly methylated pectins. The chain is Probable pectin lyase E (pelE) from Aspergillus niger.